A 167-amino-acid chain; its full sequence is Cell division protein SepF (167 aa).

The interval 25 to 64 is disordered; it reads EEDVAPVNNSTFQEKKHKKRSAVQRKQKNSDQEGDSVVPL. The span at 39–51 shows a compositional bias: basic residues; the sequence is KKHKKRSAVQRKQ.

It belongs to the SepF family. Homodimer. Interacts with FtsZ.

Its subcellular location is the cytoplasm. Functionally, cell division protein that is part of the divisome complex and is recruited early to the Z-ring. Probably stimulates Z-ring formation, perhaps through the cross-linking of FtsZ protofilaments. Its function overlaps with FtsA. In Natranaerobius thermophilus (strain ATCC BAA-1301 / DSM 18059 / JW/NM-WN-LF), this protein is Cell division protein SepF.